The primary structure comprises 772 residues: 1,4-alpha-glucan branching enzyme GlgB (772 aa).

Asp431 serves as the catalytic Nucleophile. The active-site Proton donor is the Glu484.

This sequence belongs to the glycosyl hydrolase 13 family. GlgB subfamily. As to quaternary structure, monomer.

It carries out the reaction Transfers a segment of a (1-&gt;4)-alpha-D-glucan chain to a primary hydroxy group in a similar glucan chain.. It participates in glycan biosynthesis; glycogen biosynthesis. Catalyzes the formation of the alpha-1,6-glucosidic linkages in glycogen by scission of a 1,4-alpha-linked oligosaccharide from growing alpha-1,4-glucan chains and the subsequent attachment of the oligosaccharide to the alpha-1,6 position. The sequence is that of 1,4-alpha-glucan branching enzyme GlgB from Synechococcus sp. (strain RCC307).